Consider the following 706-residue polypeptide: Septin ring organizing protein mid2 (706 aa).

Disordered stretches follow at residues 62-102 (STAP…PFST) and 145-180 (DEAS…KKNP). Composition is skewed to polar residues over residues 81–90 (YDQTLSNSSS) and 149–169 (NKSS…SNQG). Serine 379 is subject to Phosphoserine. The region spanning 583 to 688 (TLLCDGYLCQ…WMSTLRQHLG (106 aa)) is the PH domain.

This sequence belongs to the BUD4 family.

The protein resides in the cytoplasm. Its subcellular location is the cell cortex. It localises to the cytoskeleton. In terms of biological role, responsible for the proper stability and function of septins during cytokinesis. Required for the correct formation of the medial septin ring structure in mitosis and for the proper localization of endo-glucanases agn1 and eng1, which are needed for efficient cell separation. May act as a landmark for the localization of hydrolytic proteins to the medial region. This Schizosaccharomyces pombe (strain 972 / ATCC 24843) (Fission yeast) protein is Septin ring organizing protein mid2 (mid2).